We begin with the raw amino-acid sequence, 620 residues long: Chaperone protein HscA homolog (620 aa).

The protein belongs to the heat shock protein 70 family.

Functionally, chaperone involved in the maturation of iron-sulfur cluster-containing proteins. Has a low intrinsic ATPase activity which is markedly stimulated by HscB. The protein is Chaperone protein HscA homolog of Bordetella petrii (strain ATCC BAA-461 / DSM 12804 / CCUG 43448).